The sequence spans 340 residues: Anthranilate phosphoribosyltransferase (340 aa).

5-phospho-alpha-D-ribose 1-diphosphate-binding positions include Gly-79, 82-83, Thr-87, 89-92, 107-115, and Ser-119; these read GD, NIST, and KHGNRAVTG. Anthranilate is bound at residue Gly-79. Ser-91 serves as a coordination point for Mg(2+). Asn-110 serves as a coordination point for anthranilate. Arg-165 lines the anthranilate pocket. Mg(2+) is bound by residues Asp-224 and Glu-225.

Belongs to the anthranilate phosphoribosyltransferase family. In terms of assembly, homodimer. Mg(2+) is required as a cofactor.

The enzyme catalyses N-(5-phospho-beta-D-ribosyl)anthranilate + diphosphate = 5-phospho-alpha-D-ribose 1-diphosphate + anthranilate. Its pathway is amino-acid biosynthesis; L-tryptophan biosynthesis; L-tryptophan from chorismate: step 2/5. Catalyzes the transfer of the phosphoribosyl group of 5-phosphorylribose-1-pyrophosphate (PRPP) to anthranilate to yield N-(5'-phosphoribosyl)-anthranilate (PRA). The polypeptide is Anthranilate phosphoribosyltransferase (Syntrophomonas wolfei subsp. wolfei (strain DSM 2245B / Goettingen)).